We begin with the raw amino-acid sequence, 419 residues long: MSLMDVLRQQDPDLAQAIDSEAERQRHGIELIASENYVSSAVLAAQGSVLTNKYAEGYPRKRYYGGCEFVDVAEDLAIKRAKQLFGAEHVNVQPHSGAQANMAVQLATLEHGDRVLGMSLAHGGHLTHGHPLNFSGKSYEIHGYGVDRETEQIDYEEVAEIAHKTQPKMIICGASAYPRNINFDLLRTIADNVGAILMADIAHIAGLVAAGLHPSPIGVAQYVTTTTHKTLRGPRGGMIMCSAEHGKNIDKTVFPGVQGGPLMHVIAAKAVAFGEALQPEYRDYMRRVVENAKVLAEALTNEGLRIVSGGTDNHLLLVDLTPVNATGKDAEKALDHAGITVNKNAIPFDPKPPMTASGLRFGTPAATTRGFGPNEMRQIAVWVGQIVRELGNKSLQAKIAGEVRELCAAFPVPGQPEYV.

Residues Leu-120 and 124 to 126 contribute to the (6S)-5,6,7,8-tetrahydrofolate site; that span reads GHL. Lys-229 is subject to N6-(pyridoxal phosphate)lysine.

It belongs to the SHMT family. As to quaternary structure, homodimer. Pyridoxal 5'-phosphate serves as cofactor.

It is found in the cytoplasm. The catalysed reaction is (6R)-5,10-methylene-5,6,7,8-tetrahydrofolate + glycine + H2O = (6S)-5,6,7,8-tetrahydrofolate + L-serine. It participates in one-carbon metabolism; tetrahydrofolate interconversion. Its pathway is amino-acid biosynthesis; glycine biosynthesis; glycine from L-serine: step 1/1. Its function is as follows. Catalyzes the reversible interconversion of serine and glycine with tetrahydrofolate (THF) serving as the one-carbon carrier. This reaction serves as the major source of one-carbon groups required for the biosynthesis of purines, thymidylate, methionine, and other important biomolecules. Also exhibits THF-independent aldolase activity toward beta-hydroxyamino acids, producing glycine and aldehydes, via a retro-aldol mechanism. The chain is Serine hydroxymethyltransferase from Herpetosiphon aurantiacus (strain ATCC 23779 / DSM 785 / 114-95).